We begin with the raw amino-acid sequence, 378 residues long: Stimulator of interferon genes protein (378 aa).

Topologically, residues 1–17 (MPYSSLHPSIPQPRGLR) are cytoplasmic. Positions 1 to 190 (MPYSSLHPSI…AYNQRHKNVL (190 aa)) are mediates interaction with ZDHHC1 and ZDHHC11. A helical membrane pass occupies residues 18 to 34 (AQVAALVLLGACLVALW). The Lumenal portion of the chain corresponds to 35–44 (GLGELPEYTL). Residues 45–69 (RWLVLHLASQQIGLLVKGLCSLAEE) form a helical membrane-spanning segment. The Cytoplasmic segment spans residues 70-91 (LCHVHSRYQSSYWRAARACLGC). S-palmitoyl cysteine attachment occurs at residues Cys88 and Cys91. The chain crosses the membrane as a helical span at residues 92-106 (PIRCGALLLLSCYFY). Residues 107–116 (FSIRDKAGLP) are Lumenal-facing. The helical transmembrane segment at 117 to 134 (LPWMLALLGLSQALNILL) threads the bilayer. The Cytoplasmic portion of the chain corresponds to 135 to 378 (GLQHLAPAEV…QPLPLRSDIF (244 aa)). A Glycyl lysine isopeptide (Lys-Gly) (interchain with G-Cter in ubiquitin) cross-link involves residue Lys150. Positions 153 to 339 (FNVAHGLAWS…LRHLRQEERE (187 aa)) are cyclic dinucleotide-binding domain (CBD). 2',3'-cGAMP is bound by residues Ser162 and Tyr167. Residues Ser162 and Tyr167 each contribute to the 3',3'-c-di-GMP site. A 2',3'-cUAMP-binding site is contributed by Tyr167. Residue Lys236 forms a Glycyl lysine isopeptide (Lys-Gly) (interchain with G-Cter in ubiquitin) linkage. 2 residues coordinate 2',3'-cGAMP: Arg238 and Thr263. 2',3'-cUAMP contacts are provided by Arg238 and Thr263. 3',3'-c-di-GMP-binding positions include 238-241 (RVYT) and Thr263. Residues 339–378 (EVTMGSAETSVVPTSSTLSQEPELLISGMEQPLPLRSDIF) are C-terminal tail (CTT). Position 354 is a phosphoserine (Ser354). Thr355 carries the post-translational modification Phosphothreonine. Phosphoserine; by TBK1 occurs at positions 357 and 365. A pLxIS motif motif is present at residues 362-365 (LLIS).

This sequence belongs to the STING family. In terms of assembly, homodimer; forms a homodimer in absence of cyclic nucleotide (c-di-GMP or cGAMP); 'Lys-63'-linked ubiquitination at Lys-150 is required for homodimerization. Homotetramer; in presence of cyclic nucleotide (c-di-GMP or cGAMP), forms tetramers and higher-order oligomers through side-by-side packing. Interacts (when phosphorylated) with IRF3; following activation and phosphorylation on the pLxIS motif by TBK1, recruits IRF3. Interacts with DDX58/RIG-I, MAVS and SSR2. Interacts with RNF5 and TRIM56. Interacts with TBK1; when homodimer, leading to subsequent production of IFN-beta. Interacts with IFIT1 and IFIT2. Interacts with TRIM29; this interaction induces STING1 ubiquitination and subsequent degradation. Associates with the MHC-II complex. Interacts with STEEP1; interaction takes place upon cGAMP-activation and STING1 phosphorylation by MAP3K7/TAK1 and promotes STING1 translocation to COPII vesicles. Interacts with SEC24A, SEC24B and SEC24C; promoting translocation to COPII vesicles. Interacts (when ubiquitinated) with SQSTM1; leading to relocalization to autophagosomes. Interacts with SURF4. Interacts with HNRNPA2B1. Interacts with ZDHHC1; ZDHHC1 constitutively interacts with STING1 and in presence of DNA viruses activates it by promoting its cGAMP-induced oligomerization and the recruitment of downstream signaling components. Interacts with ZDHHC11; in presence of DNA viruses promotes the recruitment of IRF3 to STING1. Interacts with TOMM70. Interacts with TAB1; promoting recruitment of TAB1 to the endoplasmic reticulum membrane and subsequent activation of MAP3K7/TAK1. Interacts (via transmembrane domain) with TMEM203. Interacts with DDX41. As to quaternary structure, (Microbial infection) Interacts with African swine fever virus/ASFV protein A528R; this interaction mediates STING1 degradation. (Microbial infection) Interacts with African swine fever virus/ASFV minor capsid protein p17. In terms of assembly, (Microbial infection) Interacts with Pseudorabies virus protein UL13; this interaction mediates STING1 degradation in a RNF5-dependent manner. In terms of processing, phosphorylation by TBK1 leads to activation and production of IFN-beta. Following cyclic nucleotide (c-di-GMP or cGAMP)-binding, activation and translocation from the endoplasmic reticulum, STING1 is phosphorylated by TBK1 at Ser-365 in the pLxIS motif. The phosphorylated pLxIS motif constitutes an IRF3-binding motif, leading to recruitment of the transcription factor IRF3 to induce type-I interferons and other cytokines. Phosphorylated on tyrosine residues upon MHC-II aggregation. Dephosphorylation by PPP6C leads to inactivation and decreased production of IFN-beta. Phosphorylation at Ser-357 is also required to activate IRF3. Phosphorylation at Ser-354 by MAP3K7/TAK1 facilitates its interaction with STEEP1, promoting STING1 translocation to COPII vesicles. Ubiquitinated. Ubiquitinated via 'Lys-63'-linked ubiquitin chains in response to double-stranded DNA treatment, leading to relocalization to autophagosomes and subsequent degradation; this process is dependent on SQSTM1. 'Lys-63'-linked ubiquitination mediated by TRIM56 at Lys-150 promotes homodimerization and recruitment of the antiviral kinase TBK1 and subsequent production of IFN-beta. 'Lys-48'-linked polyubiquitination at Lys-150 occurring after viral infection is mediated by RNF5 and leads to proteasomal degradation. 'Lys-11'-linked polyubiquitination at Lys-150 by RNF26 leads to stabilize STING1: it protects STING1 from RNF5-mediated 'Lys-48'-linked polyubiquitination. 'Lys-33'-linked and 'Lys-48'-linked deubiquitinated by USP20; leading to its stabilization and promotion of innate antiviral response. 'Lys-48'-linked deubiquitinated by USP44; leading to its stabilization and promotion of innate antiviral response. Deubiquitinated by USP13; leading to inhibition of innate antiviral response. 'Lys-63'-linked deubiquitinated by USP49; leading to inhibition of the subsequent recruitment of TBK1 to the signaling complex. 'Lys-63'-linked ubiquitination mediated by RNF39 promotes the activation of the cGAS-STING pathway. Post-translationally, palmitoylation takes place in the Golgi apparatus and creates a platform for the recruitment of TBK1. In terms of tissue distribution, expressed at higher level in the spleen, lymph node, lung and bone marrow, followed by the small intestine, heart, liver and brain, and to a lesser extent in the stomach and kidney.

The protein localises to the endoplasmic reticulum membrane. The protein resides in the cytoplasm. It localises to the perinuclear region. It is found in the endoplasmic reticulum-Golgi intermediate compartment membrane. Its subcellular location is the golgi apparatus membrane. The protein localises to the cytoplasmic vesicle. The protein resides in the autophagosome membrane. It localises to the mitochondrion outer membrane. It is found in the cell membrane. The enzyme catalyses H(+)(in) = H(+)(out). Its function is as follows. Facilitator of innate immune signaling that acts as a sensor of cytosolic DNA from bacteria and viruses and promotes the production of type I interferon (IFN-alpha and IFN-beta). Innate immune response is triggered in response to non-CpG double-stranded DNA from viruses and bacteria delivered to the cytoplasm. Acts by binding cyclic dinucleotides: recognizes and binds cyclic di-GMP (c-di-GMP), a second messenger produced by bacteria, cyclic UMP-AMP (2',3'-cUAMP), and cyclic GMP-AMP (cGAMP), a messenger produced by CGAS in response to DNA virus in the cytosol. Upon binding to c-di-GMP, cUAMP or cGAMP, STING1 oligomerizes, translocates from the endoplasmic reticulum and is phosphorylated by TBK1 on the pLxIS motif, leading to recruitment and subsequent activation of the transcription factor IRF3 to induce expression of type I interferon and exert a potent anti-viral state. Exhibits 2',3' phosphodiester linkage-specific ligand recognition: can bind both 2'-3' linked cGAMP (2'-3'-cGAMP) and 3'-3' linked cGAMP but is preferentially activated by 2'-3' linked cGAMP. The preference for 2'-3'-cGAMP, compared to other linkage isomers is probably due to the ligand itself, whichs adopts an organized free-ligand conformation that resembles the STING1-bound conformation and pays low energy costs in changing into the active conformation. In addition to promote the production of type I interferons, plays a direct role in autophagy. Following cGAMP-binding, STING1 buds from the endoplasmic reticulum into COPII vesicles, which then form the endoplasmic reticulum-Golgi intermediate compartment (ERGIC). The ERGIC serves as the membrane source for WIPI2 recruitment and LC3 lipidation, leading to formation of autophagosomes that target cytosolic DNA or DNA viruses for degradation by the lysosome. Promotes autophagy by acting as a proton channel that directs proton efflux from the Golgi to facilitate MAP1LC3B/LC3B lipidation. The autophagy- and interferon-inducing activities can be uncoupled and autophagy induction is independent of TBK1 phosphorylation. Autophagy is also triggered upon infection by bacteria: following c-di-GMP-binding, which is produced by live Gram-positive bacteria, promotes reticulophagy. May be involved in translocon function, the translocon possibly being able to influence the induction of type I interferons. May be involved in transduction of apoptotic signals via its association with the major histocompatibility complex class II (MHC-II). The sequence is that of Stimulator of interferon genes protein from Sus scrofa (Pig).